The following is a 219-amino-acid chain: MTIHAAVIQKLLNTGAHLGRRAAEHHFKQYAYGTRNGMTIIDSDKTLICLRSAAHFVANLAHMRGNIFFVNTNPLFDEIIELTSRRIQGDSYNHNRAMNLWKMGGFLTNSYSPKKFRSRHKKLCFGPTTMPDCVVVFDSERKSSVILEASKLQIPVVAIVDPNVPLEFFEKITYPVPARDSVKFVYLFCNVITKCFVAEQMKLGIKEGSNEDLMKDLAA.

The protein belongs to the universal ribosomal protein uS2 family. In terms of assembly, component of the mitochondrial ribosome small subunit.

It localises to the mitochondrion. This chain is Small ribosomal subunit protein uS2m (RPS2), found in Arabidopsis thaliana (Mouse-ear cress).